We begin with the raw amino-acid sequence, 87 residues long: Small ribosomal subunit protein uS15 (87 aa).

Belongs to the universal ribosomal protein uS15 family. As to quaternary structure, part of the 30S ribosomal subunit. Forms a bridge to the 50S subunit in the 70S ribosome, contacting the 23S rRNA.

Its function is as follows. One of the primary rRNA binding proteins, it binds directly to 16S rRNA where it helps nucleate assembly of the platform of the 30S subunit by binding and bridging several RNA helices of the 16S rRNA. Functionally, forms an intersubunit bridge (bridge B4) with the 23S rRNA of the 50S subunit in the ribosome. This chain is Small ribosomal subunit protein uS15, found in Clostridium acetobutylicum (strain ATCC 824 / DSM 792 / JCM 1419 / IAM 19013 / LMG 5710 / NBRC 13948 / NRRL B-527 / VKM B-1787 / 2291 / W).